The sequence spans 170 residues: Co-chaperone protein HscB homolog (170 aa).

The 75-residue stretch at 5–79 folds into the J domain; sequence DHFSLFGLPT…RARYLCEQAG (75 aa).

It belongs to the HscB family. Interacts with HscA and stimulates its ATPase activity.

In terms of biological role, co-chaperone involved in the maturation of iron-sulfur cluster-containing proteins. Seems to help targeting proteins to be folded toward HscA. The chain is Co-chaperone protein HscB homolog from Bordetella bronchiseptica (strain ATCC BAA-588 / NCTC 13252 / RB50) (Alcaligenes bronchisepticus).